A 480-amino-acid chain; its full sequence is Sensor histidine kinase CusS (480 aa).

Topologically, residues 1 to 15 (MVSKPFQRPFSLATR) are cytoplasmic. The helical transmembrane segment at 16–36 (LTFFISLATIAAFFAFAWIMI) threads the bilayer. Residues 37–186 (HSVKVHFAEQ…LHYINDLMNK (150 aa)) lie on the Periplasmic side of the membrane. A helical membrane pass occupies residues 187 to 207 (LIMTASVISILIVFIVLLAVH). An HAMP domain is found at 208-260 (KGHAPIRSVSRQIQNITSKDLDVRLDPQTVPIELEQLVLSFNHMIERIEDVFT). Over 208-480 (KGHAPIRSVS…GTRFVITLPA (273 aa)) the chain is Cytoplasmic. The Histidine kinase domain occupies 268-480 (DIAHEIRTPI…GTRFVITLPA (213 aa)). Phosphohistidine; by autocatalysis is present on histidine 271.

In terms of processing, autophosphorylated.

It localises to the cell inner membrane. The catalysed reaction is ATP + protein L-histidine = ADP + protein N-phospho-L-histidine.. Its function is as follows. Member of the two-component regulatory system CusS/CusR involved in response to copper and silver. Acts as a copper/silver ion sensor. Activates CusR by phosphorylation. The chain is Sensor histidine kinase CusS (cusS) from Escherichia coli (strain K12).